We begin with the raw amino-acid sequence, 459 residues long: MAKVWSKRFDNALDTFIEKFNASIFFDRKLILEDLDCSIAHAKMLGKTEVLSSTEALQIINGLESIKVDYLEGKFSPGPPSEDIHYCIEEKLISLIGETGKKLHTGRSRNDQVGTDLRLWLRKEIDNNEILITDLQKSFLNLAKSNIYTLIPGYTHMQRAQPLSLAHHLLAYIEMLQRDRERFKEVRLRVNTSPLGAAALAGTKIKIDRHFTAAELGFEKIYKNSIDAVSDRDFCIEFVSASALLMSHLSKISEEIILWVTDEFSFAKLTDKCATGSSLMPQKKNPDVPELIRGKTGRVYGHLQALLTMVKGVPLSYNKDFQEDKEPIFDTAETISSCIKAMTILINQGIEFNVKNLSDSVENDFSNATDLADYLVGKDVPFRTAYQVVGEIVKYCLERKILFKNLKINEFKKFHPKFDEDVFLDLKPFNVVKSRNSEGGTGFVQVEKEVNNWQKKLLL.

Belongs to the lyase 1 family. Argininosuccinate lyase subfamily.

It is found in the cytoplasm. It catalyses the reaction 2-(N(omega)-L-arginino)succinate = fumarate + L-arginine. It participates in amino-acid biosynthesis; L-arginine biosynthesis; L-arginine from L-ornithine and carbamoyl phosphate: step 3/3. This chain is Argininosuccinate lyase, found in Prochlorococcus marinus (strain AS9601).